The following is a 77-amino-acid chain: Secapin (77 aa).

The first 32 residues, Met-1–Ala-32, serve as a signal peptide directing secretion. The propeptide occupies Val-33–Arg-52. Residues Cys-61 and Cys-72 are joined by a disulfide bond.

Belongs to the secapin family. As to expression, expressed by the venom gland.

It localises to the secreted. Its function is as follows. Nontoxic peptide. The protein is Secapin of Vespa magnifica (Hornet).